The following is a 420-amino-acid chain: Threonine aspartase 1 (420 aa).

Residues 1–23 form a disordered region; the sequence is MTMEKGMSSGEGLPSRSSQVSAG. Threonine 234 serves as the catalytic Nucleophile.

The protein belongs to the Ntn-hydrolase family. In terms of assembly, intramolecular proteolysis generates 2 subunits, alpha and beta, which reassemble through a non-covalent association to form the fully active enzyme.

Protease responsible for KMT2A/MLL1 processing and activation. It also activates KMT2D/MLL2. Through substrate activation, it controls the expression of HOXA genes, and the expression of key cell cycle regulators including CCNA1, CCNB1, CCNE1 and CDKN2A. The chain is Threonine aspartase 1 (TASP1) from Homo sapiens (Human).